Consider the following 105-residue polypeptide: UPF0060 membrane protein Rmet_4032 (105 aa).

A run of 4 helical transmembrane segments spans residues 4–24 (VGLY…PYLW), 28–48 (GASP…AWLL), 60–80 (AAYG…VDGV), and 82–102 (PSPW…IIVF).

This sequence belongs to the UPF0060 family.

The protein localises to the cell inner membrane. This Cupriavidus metallidurans (strain ATCC 43123 / DSM 2839 / NBRC 102507 / CH34) (Ralstonia metallidurans) protein is UPF0060 membrane protein Rmet_4032.